Here is a 206-residue protein sequence, read N- to C-terminus: MAYAFKKNGLLKPFVSTAAICLLVAGTVVLCHASGGGEGAHHVDTGKQMKDFMWRVIDFIALAGVIVWALKKANAKGALADRSANVEKALREAEEARTAAEKKFAEYSEKLEKANQEIDGIYAAIRKEGELEKERIIAEARITAEKIREQATATATQEVLKARAELRDEAARLAVQMAEQALREAIKKDDQDRLVSEYLTKVENLH.

The helical transmembrane segment at 10–30 (LLKPFVSTAAICLLVAGTVVL) threads the bilayer.

Belongs to the ATPase B chain family. As to quaternary structure, F-type ATPases have 2 components, F(1) - the catalytic core - and F(0) - the membrane proton channel. F(1) has five subunits: alpha(3), beta(3), gamma(1), delta(1), epsilon(1). F(0) has three main subunits: a(1), b(2) and c(10-14). The alpha and beta chains form an alternating ring which encloses part of the gamma chain. F(1) is attached to F(0) by a central stalk formed by the gamma and epsilon chains, while a peripheral stalk is formed by the delta and b chains.

The protein resides in the cell inner membrane. In terms of biological role, f(1)F(0) ATP synthase produces ATP from ADP in the presence of a proton or sodium gradient. F-type ATPases consist of two structural domains, F(1) containing the extramembraneous catalytic core and F(0) containing the membrane proton channel, linked together by a central stalk and a peripheral stalk. During catalysis, ATP synthesis in the catalytic domain of F(1) is coupled via a rotary mechanism of the central stalk subunits to proton translocation. Its function is as follows. Component of the F(0) channel, it forms part of the peripheral stalk, linking F(1) to F(0). This is ATP synthase subunit b from Geobacter sulfurreducens (strain ATCC 51573 / DSM 12127 / PCA).